The following is a 587-amino-acid chain: Inorganic phosphate transporter PHO84 (587 aa).

The Extracellular segment spans residues 1 to 67 (MSSVNKDTIH…FGWQQVKTIS (67 aa)). Lysine 6 is covalently cross-linked (Glycyl lysine isopeptide (Lys-Gly) (interchain with G-Cter in ubiquitin)). The helical transmembrane segment at 68–88 (IAGVGFLTDSYDIFAINLGIT) threads the bilayer. Residues 89–108 (MMSYVYWHGSMPGPSQTLLK) lie on the Cytoplasmic side of the membrane. The chain crosses the membrane as a helical span at residues 109–129 (VSTSVGTVIGQFGFGTLADIV). Residues 130 to 133 (GRKR) lie on the Extracellular side of the membrane. The helical transmembrane segment at 134–154 (IYGMELIIMIVCTILQTTVAH) threads the bilayer. Over 155-156 (SP) the chain is Cytoplasmic. Residues 157–177 (AINFVAVLTFYRIVMGIGIGG) traverse the membrane as a helical segment. Residues 178 to 201 (DYPLSSIITSEFATTKWRGAIMGA) lie on the Extracellular side of the membrane. Residues 202-222 (VFANQAWGQISGGIIALILVA) traverse the membrane as a helical segment. Over 223-250 (AYKGELEYANSGAECDARCQKACDQMWR) the chain is Cytoplasmic. Residues 251–271 (ILIGLGTVLGLACLYFRLTIP) traverse the membrane as a helical segment. Over 272–345 (ESPRYQLDVN…RHFGQWKYGK (74 aa)) the chain is Extracellular. Lysine 298 participates in a covalent cross-link: Glycyl lysine isopeptide (Lys-Gly) (interchain with G-Cter in ubiquitin). Threonine 302 bears the Phosphothreonine mark. Residues serine 303 and serine 316 each carry the phosphoserine modification. Threonine 317 carries the post-translational modification Phosphothreonine. Serine 321 bears the Phosphoserine mark. A helical membrane pass occupies residues 346–366 (ILLGTAGSWFTLDVAFYGLSL). Residues 367–395 (NSAVILQTIGYAGSKNVYKKLYDTAVGNL) lie on the Cytoplasmic side of the membrane. A helical transmembrane segment spans residues 396-416 (ILICAGSLPGYWVSVFTVDII). Topologically, residues 417-419 (GRK) are extracellular. The chain crosses the membrane as a helical span at residues 420–440 (PIQLAGFIILTALFCVIGFAY). Residues 441 to 442 (HK) lie on the Cytoplasmic side of the membrane. The helical transmembrane segment at 443–463 (LGDHGLLALYVICQFFQNFGP) threads the bilayer. Residues 464–485 (NTTTFIVPGECFPTRYRSTAHG) are Extracellular-facing. The chain crosses the membrane as a helical span at residues 486 to 506 (ISAASGKVGAIIAQTALGTLI). Over 507-522 (DHNCARDGKPTNCWLP) the chain is Cytoplasmic. Residues 523-543 (HVMEIFALFMLLGIFTTLLIP) traverse the membrane as a helical segment. Over 544–587 (ETKRKTLEEINELYHDEIDPATLNFRNKNNDIESSSPSQLQHEA) the chain is Extracellular. Residues 568-587 (FRNKNNDIESSSPSQLQHEA) are disordered. Residues serine 577, serine 579, and serine 581 each carry the phosphoserine modification.

Belongs to the major facilitator superfamily. Phosphate:H(+) symporter (TC 2.A.1.9) family. May function as a monomer. In terms of processing, phosphorylated; phosphorylation increases after phosphate addition to the growth medium. Post-translationally, ubiquitinated in a phosphate-dependent manner; ubiquitination may influence the trafficking of PHO84 to the cell membrane and serve as a signal for endocytosis and internalization.

It is found in the cell membrane. The protein localises to the vacuole. The enzyme catalyses phosphate(in) + H(+)(in) = phosphate(out) + H(+)(out). It catalyses the reaction Mn(2+)(in) = Mn(2+)(out). The catalysed reaction is Zn(2+)(in) = Zn(2+)(out). It carries out the reaction Cu(2+)(in) = Cu(2+)(out). The enzyme catalyses Co(2+)(in) = Co(2+)(out). Its activity is regulated as follows. Transport activity is inhibited in the presence of the protonophore carbonylcyanide m-chlorophenylhydrazone. Transport activity is inhibited by glycerol-3-phosphate. Transport activity is inhibited by phosphonoacetic acid. Signaling activity is stimulated by glycerol-3-phosphate which acts as a nontransported PHO84 agonist that can trigger PKA signaling. Signaling activity is stimulated by arsenate. Its function is as follows. Proton-coupled high-affinity transporter for external inorganic phosphate. Acts as a transceptor, a membrane protein that in addition to its transporter activity also possesses receptor-like signaling activity; mediates activation of the protein kinase A (PKA) pathway targets during growth induction, triggered by phosphate addition to cells growth-arrested due to previous phosphate starvation. Is not an essential protein, since constitutive, low affinity phosphate transporters exist in yeast. Can function as a low affinity metal transporter that transports manganese, zinc, cobalt and copper. Plays a role in manganese homeostasis predominantly under manganese surplus conditions. The polypeptide is Inorganic phosphate transporter PHO84 (PHO84) (Saccharomyces cerevisiae (strain ATCC 204508 / S288c) (Baker's yeast)).